A 387-amino-acid polypeptide reads, in one-letter code: Cytochrome b (387 aa).

Transmembrane regions (helical) follow at residues 32-52 (FGSL…LLAC), 76-98 (FLLR…LHIG), 113-133 (TWNI…LGYC), and 179-199 (FFSL…MHLI). Residues histidine 82 and histidine 96 each coordinate heme b. Residues histidine 183 and histidine 197 each contribute to the heme b site. Histidine 202 provides a ligand contact to a ubiquinone. The next 4 membrane-spanning stretches (helical) occupy residues 225-245 (YLIK…YMAF), 289-309 (QLGV…PLLD), 321-341 (FGKF…WIGG), and 348-368 (FITI…ILIP).

It belongs to the cytochrome b family. Fungal cytochrome b-c1 complex contains 10 subunits; 3 respiratory subunits, 2 core proteins and 5 low-molecular weight proteins. Cytochrome b-c1 complex is a homodimer. Requires heme b as cofactor.

Its subcellular location is the mitochondrion inner membrane. Functionally, component of the ubiquinol-cytochrome c reductase complex (complex III or cytochrome b-c1 complex) that is part of the mitochondrial respiratory chain. The b-c1 complex mediates electron transfer from ubiquinol to cytochrome c. Contributes to the generation of a proton gradient across the mitochondrial membrane that is then used for ATP synthesis. This Schizosaccharomyces pombe (strain 972 / ATCC 24843) (Fission yeast) protein is Cytochrome b (cob).